A 299-amino-acid chain; its full sequence is ATP phosphoribosyltransferase (299 aa).

The protein belongs to the ATP phosphoribosyltransferase family. Long subfamily. It depends on Mg(2+) as a cofactor.

It localises to the cytoplasm. The enzyme catalyses 1-(5-phospho-beta-D-ribosyl)-ATP + diphosphate = 5-phospho-alpha-D-ribose 1-diphosphate + ATP. Its pathway is amino-acid biosynthesis; L-histidine biosynthesis; L-histidine from 5-phospho-alpha-D-ribose 1-diphosphate: step 1/9. Feedback inhibited by histidine. Its function is as follows. Catalyzes the condensation of ATP and 5-phosphoribose 1-diphosphate to form N'-(5'-phosphoribosyl)-ATP (PR-ATP). Has a crucial role in the pathway because the rate of histidine biosynthesis seems to be controlled primarily by regulation of HisG enzymatic activity. The protein is ATP phosphoribosyltransferase of Shewanella woodyi (strain ATCC 51908 / MS32).